The chain runs to 287 residues: ATP phosphoribosyltransferase (287 aa).

This sequence belongs to the ATP phosphoribosyltransferase family. Long subfamily. It depends on Mg(2+) as a cofactor.

It localises to the cytoplasm. It catalyses the reaction 1-(5-phospho-beta-D-ribosyl)-ATP + diphosphate = 5-phospho-alpha-D-ribose 1-diphosphate + ATP. The protein operates within amino-acid biosynthesis; L-histidine biosynthesis; L-histidine from 5-phospho-alpha-D-ribose 1-diphosphate: step 1/9. Feedback inhibited by histidine. Catalyzes the condensation of ATP and 5-phosphoribose 1-diphosphate to form N'-(5'-phosphoribosyl)-ATP (PR-ATP). Has a crucial role in the pathway because the rate of histidine biosynthesis seems to be controlled primarily by regulation of HisG enzymatic activity. This Methanothermobacter thermautotrophicus (strain ATCC 29096 / DSM 1053 / JCM 10044 / NBRC 100330 / Delta H) (Methanobacterium thermoautotrophicum) protein is ATP phosphoribosyltransferase (hisG).